We begin with the raw amino-acid sequence, 260 residues long: Shikimate dehydrogenase (260 aa).

Lysine 71 serves as the catalytic Proton acceptor. NADP(+) is bound at residue 124 to 128 (GAGGA).

It belongs to the shikimate dehydrogenase family.

The enzyme catalyses shikimate + NADP(+) = 3-dehydroshikimate + NADPH + H(+). Its pathway is metabolic intermediate biosynthesis; chorismate biosynthesis; chorismate from D-erythrose 4-phosphate and phosphoenolpyruvate: step 4/7. The polypeptide is Shikimate dehydrogenase (aroE) (Sulfurisphaera tokodaii (strain DSM 16993 / JCM 10545 / NBRC 100140 / 7) (Sulfolobus tokodaii)).